Here is a 402-residue protein sequence, read N- to C-terminus: Palmitoyltransferase PFA4 (402 aa).

Residues 1-8 (MAVQLKWP) are Cytoplasmic-facing. A helical transmembrane segment spans residues 9–29 (IIGVVIPCVLIAMVAYGSHYF). The Lumenal portion of the chain corresponds to 30–39 (VFRTNLSRTE). The helical transmembrane segment at 40 to 60 (QILYEVYVCIVWLSYYLAIVV) threads the bilayer. Residues 61-125 (DPGSPPKNFT…GHNNLPHFLR (65 aa)) lie on the Cytoplasmic side of the membrane. A DHHC domain is found at 78-128 (RWCKKCQNYKPERSHHCKTCNKCVLKMDHHCPWTYNCVGHNNLPHFLRFVF). C108 functions as the S-palmitoyl cysteine intermediate in the catalytic mechanism. Residues 126-146 (FVFFLIVGMTYVLFQLGKQVL) form a helical membrane-spanning segment. Over 147-165 (HYYDSSKLPSYLIDKKEMC) the chain is Lumenal. A helical membrane pass occupies residues 166–186 (AVIFLLPVTFFVFVSIIILFV). Residues 187–402 (RCMINLLFRG…LVSKDEISNN (216 aa)) are Cytoplasmic-facing.

It belongs to the DHHC palmitoyltransferase family. PFA4 subfamily.

Its subcellular location is the endoplasmic reticulum membrane. It carries out the reaction L-cysteinyl-[protein] + hexadecanoyl-CoA = S-hexadecanoyl-L-cysteinyl-[protein] + CoA. Functionally, mediates the reversible addition of palmitate to target proteins, thereby regulating their membrane association and biological function. The sequence is that of Palmitoyltransferase PFA4 from Debaryomyces hansenii (strain ATCC 36239 / CBS 767 / BCRC 21394 / JCM 1990 / NBRC 0083 / IGC 2968) (Yeast).